The sequence spans 111 residues: Translation initiation factor 1A 1 (111 aa).

Residues 1 to 28 (MTLADLKKPTSRASPSTEETVTRVRTPR) are disordered. An S1-like domain is found at 22–96 (TRVRTPRREN…EKADVIWKYT (75 aa)).

This sequence belongs to the eIF-1A family.

Seems to be required for maximal rate of protein biosynthesis. Enhances ribosome dissociation into subunits and stabilizes the binding of the initiator Met-tRNA(I) to 40 S ribosomal subunits. This is Translation initiation factor 1A 1 (eIF1A1) from Methanosarcina mazei (strain ATCC BAA-159 / DSM 3647 / Goe1 / Go1 / JCM 11833 / OCM 88) (Methanosarcina frisia).